Reading from the N-terminus, the 671-residue chain is DNA ligase (671 aa).

Residues 32 to 36 (DAEYD), 81 to 82 (SL), and glutamate 113 contribute to the NAD(+) site. Residue lysine 115 is the N6-AMP-lysine intermediate of the active site. NAD(+) contacts are provided by arginine 136, glutamate 173, lysine 290, and lysine 314. Zn(2+) is bound by residues cysteine 408, cysteine 411, cysteine 426, and cysteine 432. Residues 593-671 (EIDSPFAGKT…EAEMLRLLGS (79 aa)) enclose the BRCT domain.

This sequence belongs to the NAD-dependent DNA ligase family. LigA subfamily. Requires Mg(2+) as cofactor. Mn(2+) is required as a cofactor.

The catalysed reaction is NAD(+) + (deoxyribonucleotide)n-3'-hydroxyl + 5'-phospho-(deoxyribonucleotide)m = (deoxyribonucleotide)n+m + AMP + beta-nicotinamide D-nucleotide.. In terms of biological role, DNA ligase that catalyzes the formation of phosphodiester linkages between 5'-phosphoryl and 3'-hydroxyl groups in double-stranded DNA using NAD as a coenzyme and as the energy source for the reaction. It is essential for DNA replication and repair of damaged DNA. The sequence is that of DNA ligase from Shigella flexneri serotype 5b (strain 8401).